The following is a 1006-amino-acid chain: GATA zinc finger domain-containing protein 7 (1006 aa).

Residues 55–70 show a composition bias toward low complexity; sequence SSSNNFINNHHNNQSS. 5 disordered regions span residues 55–116, 128–248, 381–499, 528–638, and 657–800; these read SSSN…APNL, PFQN…DPFY, NAKK…PLST, STSG…SSNS, and YNSN…NYHD. Polar residues predominate over residues 71-86; the sequence is DIHSISQSTPNLSTLI. 2 stretches are compositionally biased toward low complexity: residues 87–110 and 128–158; these read SSSS…NSSS and PFQN…CNNS. Residues 159-168 are compositionally biased toward polar residues; that stretch reads PVSSSTNYIP. The segment covering 169-180 has biased composition (low complexity); the sequence is NNSTSNVVLNSS. A compositionally biased stretch (polar residues) spans 181–190; the sequence is IPTTSPNVLS. Low complexity-rich tracts occupy residues 205 to 241 and 388 to 410; these read NNNN…NNNN and TNTN…NNNN. Residues 411–426 show a composition bias toward polar residues; the sequence is IQQANVNTSPISTSTT. Low complexity-rich tracts occupy residues 427-456 and 468-496; these read PNNN…QQAQ and SITP…GASP. The segment covering 528 to 539 has biased composition (polar residues); it reads STSGMLSTTNPY. Positions 540–557 are enriched in low complexity; it reads THHSPNTSSTVSSSVTSP. Positions 558-589 are enriched in polar residues; the sequence is LINQYGTNPTLTNNHSFYGSLASNQNTGASDG. 2 stretches are compositionally biased toward low complexity: residues 590–601 and 619–638; these read NNNNNNNNNNNN and SSNP…SSNS. The segment covering 662–680 has biased composition (polar residues); sequence GSGMTTPQSLGHSPSHNDY. Low complexity-rich tracts occupy residues 681 to 706 and 713 to 785; these read NSNN…NSNN and SNSS…SSNN. The GATA-type zinc finger occupies 842–867; sequence CHNCGTKNTPEWRRGPSGPATLCNAC. A disordered region spans residues 925 to 957; that stretch reads NNASSSSSSSSSSSSSSSSSSSTSSYSSSSYNI. Positions 928-954 are enriched in low complexity; sequence SSSSSSSSSSSSSSSSSSSTSSYSSSS.

This is GATA zinc finger domain-containing protein 7 (gtaG) from Dictyostelium discoideum (Social amoeba).